A 64-amino-acid chain; its full sequence is MRLHHLLLALLFLVLSAGSGFTQGVRNSQSCRRNKGICVPIRCPGSMRQIGTCLGAQVKCCRRK.

Positions 1–24 (MRLHHLLLALLFLVLSAGSGFTQG) are cleaved as a signal peptide. 3 disulfides stabilise this stretch: C31–C60, C38–C53, and C43–C61.

Belongs to the beta-defensin family. LAP/TAP subfamily. In terms of tissue distribution, in many of the exposed epithelial surfaces including conjunctivae, bronchi, colon, urinary tract and trachea.

It is found in the secreted. Shows a broad spectrum of antibacterial and antifungal activities. This Bos taurus (Bovine) protein is Lingual antimicrobial peptide (LAP).